The primary structure comprises 456 residues: Cysteine--tRNA ligase (456 aa).

Zn(2+) is bound at residue C28. Residues 30–40 (ITVYDHCHLGH) carry the 'HIGH' region motif. Zn(2+) contacts are provided by C209, H234, and E238. Residues 266 to 270 (KMAKS) carry the 'KMSKS' region motif. Residue K269 participates in ATP binding.

This sequence belongs to the class-I aminoacyl-tRNA synthetase family. As to quaternary structure, monomer. It depends on Zn(2+) as a cofactor.

The protein resides in the cytoplasm. The enzyme catalyses tRNA(Cys) + L-cysteine + ATP = L-cysteinyl-tRNA(Cys) + AMP + diphosphate. This Legionella pneumophila subsp. pneumophila (strain Philadelphia 1 / ATCC 33152 / DSM 7513) protein is Cysteine--tRNA ligase.